A 153-amino-acid polypeptide reads, in one-letter code: MDHNQYLLTMFFADDDSFFKYLASQDDESSLSDILQITQYLDFLLLLLIQSKNKLEAVGHCYESLSEEYRQLTKFTDSQDFKKLFNKVPIVTDGRVKLNKGYLFDFVISLMRFKKESSLATTAIDPIRYIDPRRDIAFSNVMDILKSNKVNNN.

It belongs to the orthopoxvirus OPG100 family. As to quaternary structure, homodimer. Part of a complex composed of the kinase OPG054, OPG092, OPG114, OPG115, OPG142 and OPG157. Interacts with OPG175.

Its subcellular location is the virion. The protein localises to the host cytoplasm. In terms of biological role, late protein which is a part of a large complex required for early virion morphogenesis. This complex participates in the formation of virosomes and the incorporation of virosomal contents into nascent immature virions. Plays a role in DNA packaging during immature virions (IV) formation. This is Virion assembly protein OPG100 (OPG100) from Vaccinia virus (strain Copenhagen) (VACV).